We begin with the raw amino-acid sequence, 98 residues long: Cystatin-B (98 aa).

Met1 carries the N-acetylmethionine modification. The short motif at 46–50 (QLVAG) is the Secondary area of contact element.

This sequence belongs to the cystatin family. As to quaternary structure, able to form dimers stabilized by noncovalent forces.

It localises to the cytoplasm. This is an intracellular thiol proteinase inhibitor. This is Cystatin-B (CSTB) from Bos taurus (Bovine).